A 164-amino-acid polypeptide reads, in one-letter code: Large ribosomal subunit protein uL10 (164 aa).

It belongs to the universal ribosomal protein uL10 family. In terms of assembly, part of the ribosomal stalk of the 50S ribosomal subunit. The N-terminus interacts with L11 and the large rRNA to form the base of the stalk. The C-terminus forms an elongated spine to which L12 dimers bind in a sequential fashion forming a multimeric L10(L12)X complex.

Functionally, forms part of the ribosomal stalk, playing a central role in the interaction of the ribosome with GTP-bound translation factors. This Pseudoalteromonas translucida (strain TAC 125) protein is Large ribosomal subunit protein uL10.